The primary structure comprises 369 residues: MSSALLLAPGDLIEKAKRELEQRSIAPLLREKNSTEAKSKLKEDGEKKNKSEKEENKIHDDRRVESQESEGSGSADCQRGAGSRGADCATSTGGGDGGAGARTGIGGGGVGRVDSRSGGRGGQGAASDGKGVGKSKTGADRVANDGATRDVGTSEVSSSGITSGGLQGRGGLVAKSSECGGEPLDRTGGCSGNSKTEGEEAKVGGGDRRIGGLATQGIADFVKKKIGVEVQVFSKGMSNFFTVDKSLLKRGGLGREDILHQSDIVKEIRASDKKVKIIPLSTVKRMIAEFGGTEEDEIKAVQTQSSSIRYISNRMEDVSRAKAMFTAPTGDEGWKEVAKAATQRPNIMAYVHEGEGDGLKELLHLIDHI.

A disordered region spans residues 20–208 (LEQRSIAPLL…EEAKVGGGDR (189 aa)). Positions 29–66 (LREKNSTEAKSKLKEDGEKKNKSEKEENKIHDDRRVES) are enriched in basic and acidic residues. Gly residues-rich tracts occupy residues 92 to 111 (TGGGDGGAGARTGIGGGGVG) and 162 to 171 (TSGGLQGRGG). Basic and acidic residues predominate over residues 196–208 (TEGEEAKVGGGDR).

Belongs to the orbivirus VP6 family.

It localises to the virion. The sequence is that of Protein VP6 (S9) from African horse sickness virus 3 (AHSV-3).